The following is a 101-amino-acid chain: NAD(P)H-quinone oxidoreductase subunit 4L, chloroplastic (101 aa).

Helical transmembrane passes span 2 to 22 (MLEH…YGLI), 32 to 52 (MCLE…SDFF), and 61 to 81 (IFSI…PAIV).

The protein belongs to the complex I subunit 4L family. In terms of assembly, NDH is composed of at least 16 different subunits, 5 of which are encoded in the nucleus.

Its subcellular location is the plastid. It is found in the chloroplast thylakoid membrane. The enzyme catalyses a plastoquinone + NADH + (n+1) H(+)(in) = a plastoquinol + NAD(+) + n H(+)(out). The catalysed reaction is a plastoquinone + NADPH + (n+1) H(+)(in) = a plastoquinol + NADP(+) + n H(+)(out). Functionally, NDH shuttles electrons from NAD(P)H:plastoquinone, via FMN and iron-sulfur (Fe-S) centers, to quinones in the photosynthetic chain and possibly in a chloroplast respiratory chain. The immediate electron acceptor for the enzyme in this species is believed to be plastoquinone. Couples the redox reaction to proton translocation, and thus conserves the redox energy in a proton gradient. This is NAD(P)H-quinone oxidoreductase subunit 4L, chloroplastic from Morus indica (Mulberry).